A 344-amino-acid chain; its full sequence is MIRVGIVGYGTIGKRIADAVVAQDDMKIAGVLKVSPDYEAKVAVSRGFPVYTLPDRVEKFKKAGIEPAGTIEDLIKASDVVVDASPEDVGRENKEKYYQRYDKPVIFQGGEEADVAEVSFNALANYEEARGKRYVRVVSCNTTGITRVLTSLTLNGVGIKKARIFIARRGADPKEHKKGPINDVVPNPATVPSHHGPDVQTILRNVDIVTMAVAVPVTIMHMHMAYIELDSAYPKDQVIEAFAKTPRIFLADVGAGFQSLAQVIEYARDLGRPRGDFPEVAVFRDSVTTHGNELYLMYGVHQESIVVPENIDAIRSIFGTLPKWRSIEKTDKSLKLTTEGKRYG.

NAD(+)-binding positions include 11-12 and Gly-110; that span reads TI. 139–141 contacts D-glyceraldehyde 3-phosphate; it reads SCN. Cys-140 serves as the catalytic Nucleophile. Arg-169 is a binding site for NAD(+). 195–196 lines the D-glyceraldehyde 3-phosphate pocket; that stretch reads HG. Residue Gln-302 participates in NAD(+) binding.

The protein belongs to the glyceraldehyde-3-phosphate dehydrogenase family. In terms of assembly, homotetramer.

The protein resides in the cytoplasm. It carries out the reaction D-glyceraldehyde 3-phosphate + phosphate + NADP(+) = (2R)-3-phospho-glyceroyl phosphate + NADPH + H(+). The enzyme catalyses D-glyceraldehyde 3-phosphate + phosphate + NAD(+) = (2R)-3-phospho-glyceroyl phosphate + NADH + H(+). The protein operates within carbohydrate degradation; glycolysis; pyruvate from D-glyceraldehyde 3-phosphate: step 1/5. This chain is Glyceraldehyde-3-phosphate dehydrogenase, found in Pyrobaculum neutrophilum (strain DSM 2338 / JCM 9278 / NBRC 100436 / V24Sta) (Thermoproteus neutrophilus).